A 71-amino-acid chain; its full sequence is UPF0352 protein Ssed_1809 (71 aa).

It belongs to the UPF0352 family.

The chain is UPF0352 protein Ssed_1809 from Shewanella sediminis (strain HAW-EB3).